Here is a 175-residue protein sequence, read N- to C-terminus: NADH-ubiquinone oxidoreductase chain 6 (175 aa).

6 consecutive transmembrane segments (helical) span residues 1–21, 25–45, 51–71, 87–107, 112–132, and 148–168; these read MMYI…GFSS, PVYG…IIMG, LGLV…GYTI, VVLG…MWLF, ELVG…EGGF, and YGFW…FIAI.

Belongs to the complex I subunit 6 family. As to quaternary structure, core subunit of respiratory chain NADH dehydrogenase (Complex I) which is composed of 45 different subunits.

Its subcellular location is the mitochondrion inner membrane. It carries out the reaction a ubiquinone + NADH + 5 H(+)(in) = a ubiquinol + NAD(+) + 4 H(+)(out). Core subunit of the mitochondrial membrane respiratory chain NADH dehydrogenase (Complex I) which catalyzes electron transfer from NADH through the respiratory chain, using ubiquinone as an electron acceptor. Essential for the catalytic activity and assembly of complex I. The protein is NADH-ubiquinone oxidoreductase chain 6 (MT-ND6) of Loxodonta africana (African elephant).